Reading from the N-terminus, the 316-residue chain is uncharacterized protein (316 aa).

One can recognise an HTH lacI-type domain in the interval 1–56; that stretch reads MATLSDVAKKANVSKMTVSRVINHPETVTDELKKLVHSAMKELNYIPNYAARALVQ. A DNA-binding region (H-T-H motif) is located at residues 4-23; it reads LSDVAKKANVSKMTVSRVIN.

This is an uncharacterized protein from Bacillus subtilis (strain 168).